A 1231-amino-acid polypeptide reads, in one-letter code: Alpha-protein kinase 1 (1231 aa).

Residues F61, Q67, R116, 150–153 (RQAR), D231, K233, 236–237 (ST), and F295 each bind ADP-D-glycero-beta-D-manno-heptose. Disordered regions lie at residues 508–540 (ERVSSQDSRSTASSKMSKKDQGKLQRERGRSWT), 609–637 (GSGQEKHPVEAQSSEAVSEEPKRNRSSRA), 692–739 (GSNN…GDVP), 767–791 (TFAPSSVDPEGETAESTDDGLSPSQ), 811–843 (PDGSVQNADSAKTGCSVRDQTVDPDASTVDEEG), and 859–888 (AHRPRALRSGQSAEGPKSFVNGSRPSPIFD). Residues 509-522 (RVSSQDSRSTASSK) show a composition bias toward polar residues. Over residues 524–537 (SKKDQGKLQRERGR) the composition is skewed to basic and acidic residues. The span at 700 to 714 (SSHSCGSDSWSLSSS) shows a compositional bias: low complexity. The span at 775–784 (PEGETAESTD) shows a compositional bias: acidic residues. The 221-residue stretch at 1003–1223 (KYSKKSELWT…ICHRLSLTRP (221 aa)) folds into the Alpha-type protein kinase domain.

It belongs to the protein kinase superfamily. Alpha-type protein kinase family. ALPK subfamily. In terms of tissue distribution, widely expressed. Expressed in the retina and in sweat glands, especially in the myoepithelial cells.

The protein localises to the cytoplasm. The protein resides in the cytosol. It localises to the cytoskeleton. Its subcellular location is the spindle pole. It is found in the microtubule organizing center. The protein localises to the centrosome. The protein resides in the cell projection. It localises to the cilium. The catalysed reaction is L-seryl-[protein] + ATP = O-phospho-L-seryl-[protein] + ADP + H(+). The enzyme catalyses L-threonyl-[protein] + ATP = O-phospho-L-threonyl-[protein] + ADP + H(+). Serine/threonine-protein kinase activity is stimulated upon ADP-D-glycero-beta-D-manno-heptose (ADP-Heptose)-binding. Functionally, serine/threonine-protein kinase that detects bacterial pathogen-associated molecular pattern metabolites (PAMPs) and initiates an innate immune response, a critical step for pathogen elimination and engagement of adaptive immunity. Specifically recognizes and binds ADP-D-glycero-beta-D-manno-heptose (ADP-Heptose), a potent PAMP present in all Gram-negative and some Gram-positive bacteria. ADP-Heptose-binding stimulates its kinase activity to phosphorylate and activate TIFA, triggering pro-inflammatory NF-kappa-B signaling. May be involved in monosodium urate monohydrate (MSU)-induced inflammation by mediating phosphorylation of unconventional myosin MYO9A. May also play a role in apical protein transport by mediating phosphorylation of unconventional myosin MYO1A. May play a role in ciliogenesis. The protein is Alpha-protein kinase 1 of Mus musculus (Mouse).